A 150-amino-acid chain; its full sequence is UPF0735 ACT domain-containing protein DSY2247 (150 aa).

The region spanning 74-149 (TFSLTLENTA…GVRKIEVIGQ (76 aa)) is the ACT domain.

This sequence belongs to the UPF0735 family.

This chain is UPF0735 ACT domain-containing protein DSY2247, found in Desulfitobacterium hafniense (strain Y51).